A 909-amino-acid chain; its full sequence is Protein translocase subunit SecA (909 aa).

Residues Gln-87, Gly-105–Thr-109, and Asp-513 contribute to the ATP site. The tract at residues Gln-834–Asp-909 is disordered. Over residues Glu-836–Arg-853 the composition is skewed to basic and acidic residues. Low complexity predominate over residues Arg-854 to Gln-863. Positions Glu-874 to Arg-889 are enriched in basic and acidic residues. Positions 893, 895, 904, and 905 each coordinate Zn(2+). Residues Lys-899–Asp-909 are compositionally biased toward basic residues.

The protein belongs to the SecA family. In terms of assembly, monomer and homodimer. Part of the essential Sec protein translocation apparatus which comprises SecA, SecYEG and auxiliary proteins SecDF-YajC and YidC. It depends on Zn(2+) as a cofactor.

The protein resides in the cell inner membrane. It localises to the cytoplasm. The enzyme catalyses ATP + H2O + cellular proteinSide 1 = ADP + phosphate + cellular proteinSide 2.. Part of the Sec protein translocase complex. Interacts with the SecYEG preprotein conducting channel. Has a central role in coupling the hydrolysis of ATP to the transfer of proteins into and across the cell membrane, serving both as a receptor for the preprotein-SecB complex and as an ATP-driven molecular motor driving the stepwise translocation of polypeptide chains across the membrane. This chain is Protein translocase subunit SecA, found in Vibrio campbellii (strain ATCC BAA-1116).